The primary structure comprises 657 residues: Threonine--tRNA ligase (657 aa).

Positions glutamine 7 to threonine 70 constitute a TGS domain. A catalytic region spans residues aspartate 253 to proline 555. Positions 351, 402, and 532 each coordinate Zn(2+).

This sequence belongs to the class-II aminoacyl-tRNA synthetase family. As to quaternary structure, homodimer. It depends on Zn(2+) as a cofactor.

The protein resides in the cytoplasm. It carries out the reaction tRNA(Thr) + L-threonine + ATP = L-threonyl-tRNA(Thr) + AMP + diphosphate + H(+). Its function is as follows. Catalyzes the attachment of threonine to tRNA(Thr) in a two-step reaction: L-threonine is first activated by ATP to form Thr-AMP and then transferred to the acceptor end of tRNA(Thr). Also edits incorrectly charged L-seryl-tRNA(Thr). The polypeptide is Threonine--tRNA ligase (Chlorobium limicola (strain DSM 245 / NBRC 103803 / 6330)).